Consider the following 152-residue polypeptide: UPF0266 membrane protein KPN78578_23010 (152 aa).

3 helical membrane-spanning segments follow: residues 6–26 (LVII…QFIM), 45–65 (VDGM…ITQH), and 67–87 (TAIT…LFWI).

This sequence belongs to the UPF0266 family.

Its subcellular location is the cell inner membrane. In Klebsiella pneumoniae subsp. pneumoniae (strain ATCC 700721 / MGH 78578), this protein is UPF0266 membrane protein KPN78578_23010.